Here is a 277-residue protein sequence, read N- to C-terminus: MAIEAPVNFAPPERSTVVSTAGDSSTWQPSSLRMHVIRPKSAKGRKRPNLHRPQGMGDGSPSALSSSPPPRSSGSPSNQKPGVCATVSTSQGAPDEMPELLLQQAPTRTASSLNRYPVLPSINRRSLEVGAVDTVASKTSSLQLSSVQALYQEDSSQEDSRTQVCALEKKFIIRTKRQSSSRASNIEEPSDEEPRLLLAVRSPSGQRFVRYFRPSDDLQTVLEVAEQKNKATYQHCSIETMEVPRRRFSDLTKSLQECGILHKSVLGISQEEGEAWP.

The tract at residues 1 to 102 (MAIEAPVNFA…APDEMPELLL (102 aa)) is disordered. The span at 16–31 (TVVSTAGDSSTWQPSS) shows a compositional bias: polar residues. The span at 35–50 (HVIRPKSAKGRKRPNL) shows a compositional bias: basic residues. Residues 60–77 (SPSALSSSPPPRSSGSPS) are compositionally biased toward low complexity. At Ser-88 the chain carries Phosphoserine. In terms of domain architecture, UBX spans 191 to 268 (DEEPRLLLAV…GILHKSVLGI (78 aa)).

The protein belongs to the UBXN10 family. In terms of assembly, interacts with CLUAP1; the interaction is direct and mediates interaction with the intraflagellar transport complex B (IFT-B). Interacts with VCP; the interaction is direct.

The protein localises to the cell projection. It localises to the cilium. Its function is as follows. VCP/p97-binding protein required for ciliogenesis. Acts as a tethering factor that facilitates recruitment of VCP/p97 to the intraflagellar transport complex B (IFT-B) in cilia. UBX domain-containing proteins act as tethering factors for VCP/p97 and may specify substrate specificity of VCP/p97. The protein is UBX domain-containing protein 10 of Mus musculus (Mouse).